The following is a 128-amino-acid chain: Small ribosomal subunit protein bS6 (128 aa).

The protein belongs to the bacterial ribosomal protein bS6 family.

In terms of biological role, binds together with bS18 to 16S ribosomal RNA. This is Small ribosomal subunit protein bS6 from Thermotoga petrophila (strain ATCC BAA-488 / DSM 13995 / JCM 10881 / RKU-1).